The following is a 136-amino-acid chain: Ribosome-binding factor A (136 aa).

Belongs to the RbfA family. In terms of assembly, monomer. Binds 30S ribosomal subunits, but not 50S ribosomal subunits or 70S ribosomes.

It localises to the cytoplasm. Functionally, one of several proteins that assist in the late maturation steps of the functional core of the 30S ribosomal subunit. Associates with free 30S ribosomal subunits (but not with 30S subunits that are part of 70S ribosomes or polysomes). Required for efficient processing of 16S rRNA. May interact with the 5'-terminal helix region of 16S rRNA. This chain is Ribosome-binding factor A, found in Yersinia enterocolitica serotype O:8 / biotype 1B (strain NCTC 13174 / 8081).